The primary structure comprises 196 residues: MKVALFGGTFNPIHIGHLIMAQYVLNFSQVQKVIFVPNGHPPHKVEDVADAFDRFEMVKLSIEDNPYFDISDFEIKKSNPSWTIDTLEYFSSIYERVYFIIGSDNLSEIVKWYKAEEILKRYPLIVLPRERNLCAIKKEIEKLSSKYAQDITLIQMPVIDISSTEIRKLISQDKSIRYMVHPKVEEYIKRKGLFKR.

The protein belongs to the NadD family.

The catalysed reaction is nicotinate beta-D-ribonucleotide + ATP + H(+) = deamido-NAD(+) + diphosphate. The protein operates within cofactor biosynthesis; NAD(+) biosynthesis; deamido-NAD(+) from nicotinate D-ribonucleotide: step 1/1. Functionally, catalyzes the reversible adenylation of nicotinate mononucleotide (NaMN) to nicotinic acid adenine dinucleotide (NaAD). This is Probable nicotinate-nucleotide adenylyltransferase from Caldicellulosiruptor bescii (strain ATCC BAA-1888 / DSM 6725 / KCTC 15123 / Z-1320) (Anaerocellum thermophilum).